The following is a 268-amino-acid chain: CCAAT/enhancer-binding protein delta (268 aa).

3 disordered regions span residues 1 to 48 (MSAA…LGST), 97 to 132 (GLEL…DAPG), and 152 to 219 (AAQP…NQEM). Position 2 is an N-acetylserine (Ser-2). Residue Lys-120 forms a Glycyl lysine isopeptide (Lys-Gly) (interchain with G-Cter in SUMO) linkage. A compositionally biased stretch (pro residues) spans 155–167 (PTPPTSPEPPRGS). Over residues 177-201 (VREKGAGKRGPDRGSPEYRQRRERN) the composition is skewed to basic and acidic residues. The 64-residue stretch at 191-254 (SPEYRQRRER…AGLRQFFKKL (64 aa)) folds into the bZIP domain. The segment at 195–222 (RQRRERNNIAVRKSRDKAKRRNQEMQQK) is basic motif. Residues 226–254 (LSAENEKLHQRVEQLTRDLAGLRQFFKKL) form a leucine-zipper region.

It belongs to the bZIP family. C/EBP subfamily. Binds DNA as a homodimer and as a heterodimer. Can form stable heterodimers with CEBPA, CEBPB and CEBPE. Directly interacts with SPI1/PU.1; this interaction does not affect DNA-binding properties of each partner. Interacts with PRDM16.

The protein resides in the nucleus. Transcription activator that recognizes two different DNA motifs: the CCAAT homology common to many promoters and the enhanced core homology common to many enhancers. Important transcription factor regulating the expression of genes involved in immune and inflammatory responses. Transcriptional activator that enhances IL6 transcription alone and as heterodimer with CEBPB. The chain is CCAAT/enhancer-binding protein delta (Cebpd) from Mus musculus (Mouse).